The following is a 386-amino-acid chain: Na(+)/H(+) antiporter NhaA (386 aa).

The next 11 membrane-spanning stretches (helical) occupy residues 11–31 (NDAT…FLAN), 60–80 (LLLW…GLEV), 96–116 (MFPL…YAAF), 126–146 (GWAI…ALLG), 155–175 (MFLM…IALF), 180–200 (LSLI…VLNG), 218–238 (VAVL…GLFI), 260–280 (VSWL…LSGV), 293–313 (ITLG…WLAV), 326–346 (LIDI…SIFI), and 358–378 (LVTL…LVGY).

The protein belongs to the NhaA Na(+)/H(+) (TC 2.A.33) antiporter family.

It localises to the cell inner membrane. The catalysed reaction is Na(+)(in) + 2 H(+)(out) = Na(+)(out) + 2 H(+)(in). Functionally, na(+)/H(+) antiporter that extrudes sodium in exchange for external protons. In Erwinia tasmaniensis (strain DSM 17950 / CFBP 7177 / CIP 109463 / NCPPB 4357 / Et1/99), this protein is Na(+)/H(+) antiporter NhaA.